Here is a 117-residue protein sequence, read N- to C-terminus: Photosystem II reaction center Psb28 protein (117 aa).

This sequence belongs to the Psb28 family. Part of the photosystem II complex.

It is found in the cellular thylakoid membrane. The sequence is that of Photosystem II reaction center Psb28 protein from Prochlorococcus marinus (strain MIT 9301).